The following is a 160-amino-acid chain: Phosphopantetheine adenylyltransferase (160 aa).

S8 serves as a coordination point for substrate. ATP contacts are provided by residues 8-9 and H16; that span reads SF. The substrate site is built by K40, L73, and K87. ATP contacts are provided by residues 88–90, E98, and 122–128; these read GLR and YGYVSST.

The protein belongs to the bacterial CoaD family. Homohexamer. It depends on Mg(2+) as a cofactor.

It localises to the cytoplasm. It catalyses the reaction (R)-4'-phosphopantetheine + ATP + H(+) = 3'-dephospho-CoA + diphosphate. Its pathway is cofactor biosynthesis; coenzyme A biosynthesis; CoA from (R)-pantothenate: step 4/5. In terms of biological role, reversibly transfers an adenylyl group from ATP to 4'-phosphopantetheine, yielding dephospho-CoA (dPCoA) and pyrophosphate. This is Phosphopantetheine adenylyltransferase from Corynebacterium glutamicum (strain R).